We begin with the raw amino-acid sequence, 254 residues long: tRNA 2'-phosphotransferase 1 (254 aa).

The residue at position 1 (M1) is an N-acetylmethionine. Disordered stretches follow at residues 1 to 30 (MNSF…DRDV) and 225 to 254 (RKPL…MTQQ). Over residues 233-244 (NEEKEHQRDSKH) the composition is skewed to basic and acidic residues.

It belongs to the KptA/TPT1 family.

The enzyme catalyses 2'-phospho-[ligated tRNA] + NAD(+) = mature tRNA + ADP-alpha-D-ribose 1'',2''-cyclic phosphate + nicotinamide. In terms of biological role, catalyzes the last step of tRNA splicing, the transfer of the splice junction 2'-phosphate from ligated tRNA to NAD to produce ADP-ribose 1''-2'' cyclic phosphate. This chain is tRNA 2'-phosphotransferase 1 (TRPT1), found in Bos taurus (Bovine).